We begin with the raw amino-acid sequence, 360 residues long: MQFTALLAALGAPLALAASIPAAAHNHTMIDVQLAATGNSMIKATITNTGDRTLNLLKFNTIMDEHPTRKVMVYQDGAEVQFTGMLPRYKMSDLTPEYFVNLGPKASVEHSFDLAATHDLSRGGKITVKAHGMVPTAEENATTITGHTLYESNELTMDVDGKQAAAVEQAMGGDDSTGVIDKRSNIVTSSCRGSQLRVLQTALSNASRLSRAAASAAQRNPSKMREYFKTADKPHRPEGASRFLSVARESSSGSTGRTTYYCNDNRGGCHPGVLAYTLPSRNQVFNCPSYYQLPALNNRCHGQDQATTTLHELTHNPAVVTPFCEDLGYGYQRVSALPASKAIQNADTYSLFANAIYLGC.

A signal peptide spans 1–17 (MQFTALLAALGAPLALA). Residues 18–183 (ASIPAAAHNH…DDSTGVIDKR (166 aa)) constitute a propeptide that is removed on maturation. 3 disulfide bridges follow: Cys-191–Cys-262, Cys-269–Cys-287, and Cys-300–Cys-360. An N-linked (GlcNAc...) asparagine glycan is attached at Asn-205. Residue His-311 coordinates Zn(2+). Glu-312 is an active-site residue. Residues His-315 and Asp-326 each contribute to the Zn(2+) site.

The protein belongs to the peptidase M35 family. The cofactor is Zn(2+).

Its subcellular location is the secreted. The enzyme catalyses Preferential cleavage of bonds with hydrophobic residues in P1'. Also 3-Asn-|-Gln-4 and 8-Gly-|-Ser-9 bonds in insulin B chain.. In terms of biological role, probable secreted metalloprotease that shows high activities on basic nuclear substrates such as histone and protamine. May be involved in virulence. The protein is Probable neutral protease 2 homolog A (NpII-A) of Trichophyton rubrum (Athlete's foot fungus).